A 360-amino-acid polypeptide reads, in one-letter code: Phospho-N-acetylmuramoyl-pentapeptide-transferase (360 aa).

10 helical membrane-spanning segments follow: residues 27–47, 73–93, 97–117, 132–152, 164–184, 199–219, 236–256, 263–283, 288–308, and 337–357; these read ILSV…MIRM, TMGG…WGDL, FVWI…VDDW, WKYL…FFTA, FFKS…YFVI, GLAI…AYAG, AGEL…FLWF, VFMG…MAVI, IVLF…MLQV, and KIIV…LATL.

Belongs to the glycosyltransferase 4 family. MraY subfamily. It depends on Mg(2+) as a cofactor.

It localises to the cell inner membrane. The enzyme catalyses UDP-N-acetyl-alpha-D-muramoyl-L-alanyl-gamma-D-glutamyl-meso-2,6-diaminopimeloyl-D-alanyl-D-alanine + di-trans,octa-cis-undecaprenyl phosphate = di-trans,octa-cis-undecaprenyl diphospho-N-acetyl-alpha-D-muramoyl-L-alanyl-D-glutamyl-meso-2,6-diaminopimeloyl-D-alanyl-D-alanine + UMP. The protein operates within cell wall biogenesis; peptidoglycan biosynthesis. In terms of biological role, catalyzes the initial step of the lipid cycle reactions in the biosynthesis of the cell wall peptidoglycan: transfers peptidoglycan precursor phospho-MurNAc-pentapeptide from UDP-MurNAc-pentapeptide onto the lipid carrier undecaprenyl phosphate, yielding undecaprenyl-pyrophosphoryl-MurNAc-pentapeptide, known as lipid I. The sequence is that of Phospho-N-acetylmuramoyl-pentapeptide-transferase from Alcanivorax borkumensis (strain ATCC 700651 / DSM 11573 / NCIMB 13689 / SK2).